The primary structure comprises 46 residues: Iota-conotoxin-like r11b (46 aa).

P2 and P11 each carry 4-hydroxyproline. 4 disulfide bridges follow: C5/C19, C12/C22, C18/C27, and C21/C38. A 4-hydroxyproline modification is found at P29. F44 is subject to D-phenylalanine.

In terms of processing, the natural D-Phe form of the peptide is more potent than the synthetic L-Phe form. Expressed by the venom duct.

It is found in the secreted. Iota-conotoxins bind to voltage-gated sodium channels (Nav) and act as agonists by shifting the voltage-dependence of activation to more hyperpolarized levels. Produces excitatory symptoms when injected intracranially into mice and is lethal at higher doses. Exposure to frog cutaneous pectoris induces spontaneous and repetitive action potentials. This effect is slowly reversible. Natural peptide (with D-Phe) is active on nerve, but not on muscle. Synthetic peptide (with L-Phe) is not active on both nerve and muscle. The sequence is that of Iota-conotoxin-like r11b from Conus radiatus (Rayed cone).